Here is a 735-residue protein sequence, read N- to C-terminus: Translation initiation factor IF-2 (735 aa).

Basic and acidic residues-rich tracts occupy residues V52–K66 and K101–L117. Residues V52 to K154 are disordered. Positions A121–K133 are enriched in basic residues. The span at Q134–P145 shows a compositional bias: low complexity. The tr-type G domain occupies E236–K405. The tract at residues G245–T252 is G1. G245–T252 is a binding site for GTP. A G2 region spans residues G270–H274. A G3 region spans residues D291–G294. GTP contacts are provided by residues D291 to H295 and N345 to D348. The G4 stretch occupies residues N345–D348. A G5 region spans residues S381–K383.

Belongs to the TRAFAC class translation factor GTPase superfamily. Classic translation factor GTPase family. IF-2 subfamily.

The protein localises to the cytoplasm. Its function is as follows. One of the essential components for the initiation of protein synthesis. Protects formylmethionyl-tRNA from spontaneous hydrolysis and promotes its binding to the 30S ribosomal subunits. Also involved in the hydrolysis of GTP during the formation of the 70S ribosomal complex. The chain is Translation initiation factor IF-2 from Geobacillus thermodenitrificans (strain NG80-2).